The sequence spans 141 residues: Large ribosomal subunit protein uL11 (141 aa).

Belongs to the universal ribosomal protein uL11 family. As to quaternary structure, part of the ribosomal stalk of the 50S ribosomal subunit. Interacts with L10 and the large rRNA to form the base of the stalk. L10 forms an elongated spine to which L12 dimers bind in a sequential fashion forming a multimeric L10(L12)X complex. Post-translationally, one or more lysine residues are methylated.

In terms of biological role, forms part of the ribosomal stalk which helps the ribosome interact with GTP-bound translation factors. The polypeptide is Large ribosomal subunit protein uL11 (Exiguobacterium sp. (strain ATCC BAA-1283 / AT1b)).